A 431-amino-acid chain; its full sequence is Adenylosuccinate synthetase (431 aa).

GTP is bound by residues 12–18 (GDEGKGK) and 40–42 (GHT). The Proton acceptor role is filled by aspartate 13. Mg(2+) is bound by residues aspartate 13 and glycine 40. Residues 13-16 (DEGK), 38-41 (NAGH), threonine 130, arginine 144, glutamine 225, threonine 240, and arginine 304 contribute to the IMP site. The active-site Proton donor is histidine 41. 300-306 (ATTGRPR) provides a ligand contact to substrate. Residues arginine 306, 332-334 (KLD), and 414-416 (SVG) each bind GTP.

The protein belongs to the adenylosuccinate synthetase family. As to quaternary structure, homodimer. The cofactor is Mg(2+).

Its subcellular location is the cytoplasm. It carries out the reaction IMP + L-aspartate + GTP = N(6)-(1,2-dicarboxyethyl)-AMP + GDP + phosphate + 2 H(+). Its pathway is purine metabolism; AMP biosynthesis via de novo pathway; AMP from IMP: step 1/2. Functionally, plays an important role in the de novo pathway of purine nucleotide biosynthesis. Catalyzes the first committed step in the biosynthesis of AMP from IMP. In Geotalea uraniireducens (strain Rf4) (Geobacter uraniireducens), this protein is Adenylosuccinate synthetase.